A 207-amino-acid polypeptide reads, in one-letter code: dITP/XTP pyrophosphatase (207 aa).

Position 8 to 13 (8 to 13) interacts with substrate; that stretch reads TNNKNK. The Proton acceptor role is filled by D72. D72 provides a ligand contact to Mg(2+). Residues S73, 157–160, K180, and 185–186 contribute to the substrate site; these read FGYD and HR.

This sequence belongs to the HAM1 NTPase family. In terms of assembly, homodimer. Mg(2+) serves as cofactor.

It catalyses the reaction XTP + H2O = XMP + diphosphate + H(+). It carries out the reaction dITP + H2O = dIMP + diphosphate + H(+). The enzyme catalyses ITP + H2O = IMP + diphosphate + H(+). Its function is as follows. Pyrophosphatase that catalyzes the hydrolysis of nucleoside triphosphates to their monophosphate derivatives, with a high preference for the non-canonical purine nucleotides XTP (xanthosine triphosphate), dITP (deoxyinosine triphosphate) and ITP. Seems to function as a house-cleaning enzyme that removes non-canonical purine nucleotides from the nucleotide pool, thus preventing their incorporation into DNA/RNA and avoiding chromosomal lesions. The polypeptide is dITP/XTP pyrophosphatase (Lactobacillus johnsonii (strain CNCM I-12250 / La1 / NCC 533)).